Here is a 389-residue protein sequence, read N- to C-terminus: MYVRHLALTDFRSWSRVELELSPGRTVFVGPNGFGKTNLVEALWYSATLGSHRVASDAPLIRAGAERAVVSTIIVNEGRELAVDLDITSGRANKARLNRSPVRSAREILGVLRAVLFAPEDLALVRGDPGDRRRYLDELATTRRPRIAAVRADYDKVVRQRTALLKTASSARFRGDRGALETLDVWDGHLAAHGAQLIAARVDLVHELAPEVEKAYQLLAPASRPATVRYRSGVEVVEAEAAAGNSDPEVFEAALLDALSRRRDAELERGVCLVGPHRDDLELRLGDQPAKGFASHGESWSMALSLRLAAYELLRADGSDPVLLLDDVFAELDSARRQALAQVAASAEQVLVTAAVGEDIPVDWDARRIEIAMTDSDLGRVSVLSGVTQ.

30 to 37 (GPNGFGKT) contacts ATP.

The protein belongs to the RecF family.

The protein resides in the cytoplasm. Functionally, the RecF protein is involved in DNA metabolism; it is required for DNA replication and normal SOS inducibility. RecF binds preferentially to single-stranded, linear DNA. It also seems to bind ATP. The chain is DNA replication and repair protein RecF from Mycolicibacterium gilvum (strain PYR-GCK) (Mycobacterium gilvum (strain PYR-GCK)).